Here is a 143-residue protein sequence, read N- to C-terminus: Large ribosomal subunit protein uL11 (143 aa).

It belongs to the universal ribosomal protein uL11 family. In terms of assembly, part of the ribosomal stalk of the 50S ribosomal subunit. Interacts with L10 and the large rRNA to form the base of the stalk. L10 forms an elongated spine to which L12 dimers bind in a sequential fashion forming a multimeric L10(L12)X complex. Post-translationally, one or more lysine residues are methylated.

In terms of biological role, forms part of the ribosomal stalk which helps the ribosome interact with GTP-bound translation factors. This chain is Large ribosomal subunit protein uL11, found in Delftia acidovorans (strain DSM 14801 / SPH-1).